A 166-amino-acid polypeptide reads, in one-letter code: Small ribosomal subunit protein uS9 (166 aa).

A compositionally biased stretch (acidic residues) spans 1–16 (MSDTTNEVEETYEVDE). The disordered stretch occupies residues 1–45 (MSDTTNEVEETYEVDEQGIAYSSESAPSADAPLRPATIAPANATG).

It belongs to the universal ribosomal protein uS9 family.

The protein is Small ribosomal subunit protein uS9 of Nocardioides sp. (strain ATCC BAA-499 / JS614).